Here is a 76-residue protein sequence, read N- to C-terminus: Esculentin-2-ALa (76 aa).

A signal peptide spans 1–22; it reads MFTLKKSMLLLFFLGTISLSLC. Residues 23–39 constitute a propeptide that is removed on maturation; sequence EEERNADEDDGEKEVKR. A disulfide bond links Cys70 and Cys76.

Expressed by the skin glands.

The protein localises to the secreted. Its function is as follows. Antimicrobial peptide with activity against Gram-positive and Gram-negative bacteria and against fungi. Has been tested against S.aureus (MIC=2.5 ug/mL), B.pumilus (MIC=2.5 ug/mL), B.cereus (MIC=7.5 ug/mL), E.coli (MIC=12.5 ug/mL), B.dysenteriae (MIC=7.5 ug/mL), A.cacoaceticus (MIC=25.0 ug/mL), P.aeruginosa (MIC=50.0 ug/mL) and C.albicans (MIC=2.5 ug/mL). Also shows a weak hemolytic activity. In Amolops loloensis (Lolokou Sucker Frog), this protein is Esculentin-2-ALa.